The sequence spans 498 residues: ATP synthase subunit beta, chloroplastic (498 aa).

172-179 is a binding site for ATP; the sequence is GGAGVGKT.

Belongs to the ATPase alpha/beta chains family. F-type ATPases have 2 components, CF(1) - the catalytic core - and CF(0) - the membrane proton channel. CF(1) has five subunits: alpha(3), beta(3), gamma(1), delta(1), epsilon(1). CF(0) has four main subunits: a(1), b(1), b'(1) and c(9-12).

It is found in the plastid. The protein localises to the chloroplast thylakoid membrane. It carries out the reaction ATP + H2O + 4 H(+)(in) = ADP + phosphate + 5 H(+)(out). Produces ATP from ADP in the presence of a proton gradient across the membrane. The catalytic sites are hosted primarily by the beta subunits. This is ATP synthase subunit beta, chloroplastic from Zea mays (Maize).